A 457-amino-acid polypeptide reads, in one-letter code: Acetate--CoA ligase [ADP-forming] II subunit alpha (457 aa).

This sequence belongs to the acetate CoA ligase alpha subunit family. Heterotetramer of two alpha and two beta subunits.

The catalysed reaction is acetate + ATP + CoA = acetyl-CoA + ADP + phosphate. Its function is as follows. Catalyzes the reversible formation of acetate and ATP from acetyl-CoA by using ADP and phosphate. Can use other substrates such as phenylacetyl-CoA, indoleacetyl-CoA and isobutyryl-CoA, but not succinyl-CoA. Seems to be involved primarily in the degradation of aryl-CoA esters to the corresponding acids. Participates in the conversion of acetyl-CoA to acetate and in the degradation of branched-chain amino acids via branched-chain-acyl-CoA esters. The protein is Acetate--CoA ligase [ADP-forming] II subunit alpha of Pyrococcus furiosus (strain ATCC 43587 / DSM 3638 / JCM 8422 / Vc1).